Consider the following 272-residue polypeptide: ATP synthase subunit a (272 aa).

5 helical membrane-spanning segments follow: residues Val41–Phe61, Leu101–Leu121, Val143–Tyr165, Leu221–Pro241, and Ala243–Val263.

It belongs to the ATPase A chain family. In terms of assembly, F-type ATPases have 2 components, CF(1) - the catalytic core - and CF(0) - the membrane proton channel. CF(1) has five subunits: alpha(3), beta(3), gamma(1), delta(1), epsilon(1). CF(0) has three main subunits: a(1), b(2) and c(9-12). The alpha and beta chains form an alternating ring which encloses part of the gamma chain. CF(1) is attached to CF(0) by a central stalk formed by the gamma and epsilon chains, while a peripheral stalk is formed by the delta and b chains.

Its subcellular location is the cell inner membrane. Functionally, key component of the proton channel; it plays a direct role in the translocation of protons across the membrane. This chain is ATP synthase subunit a, found in Sodalis glossinidius (strain morsitans).